Consider the following 299-residue polypeptide: Very long chain fatty acid elongase 5 (299 aa).

M1 bears the N-acetylmethionine mark. The next 7 membrane-spanning stretches (helical) occupy residues W26 to V46, I64 to V84, V112 to L132, I139 to M158, F168 to S187, G205 to C225, and T226 to F246. S285 bears the Phosphoserine mark.

The protein belongs to the ELO family. ELOVL5 subfamily. In terms of assembly, interacts with TECR.

The protein resides in the endoplasmic reticulum membrane. Its subcellular location is the cell projection. It localises to the dendrite. The enzyme catalyses a very-long-chain acyl-CoA + malonyl-CoA + H(+) = a very-long-chain 3-oxoacyl-CoA + CO2 + CoA. It catalyses the reaction (6Z,9Z,12Z)-octadecatrienoyl-CoA + malonyl-CoA + H(+) = (8Z,11Z,14Z)-3-oxoeicosatrienoyl-CoA + CO2 + CoA. The catalysed reaction is (9Z,12Z,15Z)-octadecatrienoyl-CoA + malonyl-CoA + H(+) = (11Z,14Z,17Z)-3-oxoeicosatrienoyl-CoA + CO2 + CoA. It carries out the reaction (9Z)-hexadecenoyl-CoA + malonyl-CoA + H(+) = 3-oxo-(11Z)-octadecenoyl-CoA + CO2 + CoA. The enzyme catalyses (9Z)-octadecenoyl-CoA + malonyl-CoA + H(+) = 3-oxo-(11Z)-eicosenoyl-CoA + CO2 + CoA. It catalyses the reaction (11Z)-octadecenoyl-CoA + malonyl-CoA + H(+) = 3-oxo-(13Z)-eicosenoyl-CoA + CO2 + CoA. The catalysed reaction is (9Z,12Z)-octadecadienoyl-CoA + malonyl-CoA + H(+) = (11Z,14Z)-3-oxoicosa-11,14-dienoyl-CoA + CO2 + CoA. It carries out the reaction (6Z,9Z,12Z,15Z)-octadecatetraenoyl-CoA + malonyl-CoA + H(+) = (8Z,11Z,14Z,17Z)-3-oxoicosatetraenoyl-CoA + CO2 + CoA. The enzyme catalyses (5Z,8Z,11Z,14Z)-eicosatetraenoyl-CoA + malonyl-CoA + H(+) = (7Z,10Z,13Z,16Z)-3-oxodocosatetraenoyl-CoA + CO2 + CoA. It catalyses the reaction (5Z,8Z,11Z,14Z,17Z)-eicosapentaenoyl-CoA + malonyl-CoA + H(+) = 3-oxo-(7Z,10Z,13Z,16Z,19Z)-docosapentaenoyl-CoA + CO2 + CoA. The protein operates within lipid metabolism; polyunsaturated fatty acid biosynthesis. Its function is as follows. Catalyzes the first and rate-limiting reaction of the four reactions that constitute the long-chain fatty acids elongation cycle. This endoplasmic reticulum-bound enzymatic process allows the addition of 2 carbons to the chain of long- and very long-chain fatty acids (VLCFAs) per cycle. Condensing enzyme that acts specifically toward polyunsaturated acyl-CoA with the higher activity toward C18:3(n-6) acyl-CoA. May participate in the production of monounsaturated and of polyunsaturated VLCFAs of different chain lengths that are involved in multiple biological processes as precursors of membrane lipids and lipid mediators. In conditions where the essential linoleic and alpha linoleic fatty acids are lacking it is also involved in the synthesis of Mead acid from oleic acid. The sequence is that of Very long chain fatty acid elongase 5 from Bos taurus (Bovine).